Reading from the N-terminus, the 266-residue chain is Undecaprenyl-diphosphatase (266 aa).

The next 8 membrane-spanning stretches (helical) occupy residues 1-21 (MTLF…FLPI), 39-59 (QGLA…MIYF), 87-107 (WYVI…KGWI), 113-133 (TALV…YADA), 143-163 (GLTL…LIPG), 187-207 (FSFL…TLDL), 218-238 (ALLY…YLFL), and 244-264 (IGML…LWFV).

It belongs to the UppP family.

It is found in the cell inner membrane. It carries out the reaction di-trans,octa-cis-undecaprenyl diphosphate + H2O = di-trans,octa-cis-undecaprenyl phosphate + phosphate + H(+). In terms of biological role, catalyzes the dephosphorylation of undecaprenyl diphosphate (UPP). Confers resistance to bacitracin. The chain is Undecaprenyl-diphosphatase from Alteromonas mediterranea (strain DSM 17117 / CIP 110805 / LMG 28347 / Deep ecotype).